A 140-amino-acid chain; its full sequence is Large ribosomal subunit protein uL11 (140 aa).

It belongs to the universal ribosomal protein uL11 family. In terms of assembly, part of the ribosomal stalk of the 50S ribosomal subunit. Interacts with L10 and the large rRNA to form the base of the stalk. L10 forms an elongated spine to which L12 dimers bind in a sequential fashion forming a multimeric L10(L12)X complex. Post-translationally, one or more lysine residues are methylated.

Forms part of the ribosomal stalk which helps the ribosome interact with GTP-bound translation factors. The polypeptide is Large ribosomal subunit protein uL11 (Enterococcus faecalis (strain ATCC 700802 / V583)).